The sequence spans 118 residues: uncharacterized protein (118 aa).

This is an uncharacterized protein from Saccharomyces cerevisiae (strain ATCC 204508 / S288c) (Baker's yeast).